The sequence spans 2443 residues: Spatacsin (2443 aa).

Residue Ser1955 is modified to Phosphoserine.

As to quaternary structure, interacts with AP5Z1, AP5B1, AP5S1 and ZFYVE26. Expressed in all structures of brain, with a high expression in cerebellum. Expressed in cortical projection neurons.

The protein resides in the cytoplasm. The protein localises to the cytosol. It is found in the nucleus. It localises to the cell projection. Its subcellular location is the axon. The protein resides in the dendrite. May play a role in neurite plasticity by maintaining cytoskeleton stability and regulating synaptic vesicle transport. This Homo sapiens (Human) protein is Spatacsin (SPG11).